A 272-amino-acid polypeptide reads, in one-letter code: ATP synthase subunit a (272 aa).

Transmembrane regions (helical) follow at residues 41–61 (VLNIDSMFFSVVLGLVFLVLF), 101–121 (VIAPLALTIFVWVFLMNFMDL), 147–167 (DVNITLSMALGVFVLILFYSI), 221–241 (LIFILIAGLLPWWSQWILSVP), and 243–263 (AIFHILIISLQAFIFMVLTIV).

It belongs to the ATPase A chain family. As to quaternary structure, F-type ATPases have 2 components, CF(1) - the catalytic core - and CF(0) - the membrane proton channel. CF(1) has five subunits: alpha(3), beta(3), gamma(1), delta(1), epsilon(1). CF(0) has three main subunits: a(1), b(2) and c(9-12). The alpha and beta chains form an alternating ring which encloses part of the gamma chain. CF(1) is attached to CF(0) by a central stalk formed by the gamma and epsilon chains, while a peripheral stalk is formed by the delta and b chains.

The protein localises to the cell inner membrane. In terms of biological role, key component of the proton channel; it plays a direct role in the translocation of protons across the membrane. This is ATP synthase subunit a from Erwinia tasmaniensis (strain DSM 17950 / CFBP 7177 / CIP 109463 / NCPPB 4357 / Et1/99).